The sequence spans 319 residues: Large ribosomal subunit protein uL10 (319 aa).

Residues 289 to 319 (EQKSAAPAAKEEAPKEDSEESDEDMGFGLFD) form a disordered region.

The protein belongs to the universal ribosomal protein uL10 family. As to quaternary structure, P0 forms a pentameric complex by interaction with dimers of P1 and P2. In terms of processing, phosphorylated.

Its subcellular location is the nucleus. It is found in the cytoplasm. Functionally, ribosomal protein P0 is the functional equivalent of E.coli protein L10. In Danio rerio (Zebrafish), this protein is Large ribosomal subunit protein uL10 (rplp0).